A 102-amino-acid polypeptide reads, in one-letter code: Ribonuclease P protein component 1 (102 aa).

This sequence belongs to the eukaryotic/archaeal RNase P protein component 1 family. Consists of a catalytic RNA component and at least 4-5 protein subunits.

It is found in the cytoplasm. The enzyme catalyses Endonucleolytic cleavage of RNA, removing 5'-extranucleotides from tRNA precursor.. Functionally, part of ribonuclease P, a protein complex that generates mature tRNA molecules by cleaving their 5'-ends. This Archaeoglobus fulgidus (strain ATCC 49558 / DSM 4304 / JCM 9628 / NBRC 100126 / VC-16) protein is Ribonuclease P protein component 1.